The following is a 267-amino-acid chain: 4-hydroxy-tetrahydrodipicolinate reductase (267 aa).

Gly8–Met13 is a binding site for NAD(+). NADP(+) is bound at residue Arg35. NAD(+) contacts are provided by residues Gly98–Thr100 and Ala122–Met125. His155 serves as the catalytic Proton donor/acceptor. Residue His156 participates in (S)-2,3,4,5-tetrahydrodipicolinate binding. The active-site Proton donor is Lys159. Gly165–Thr166 lines the (S)-2,3,4,5-tetrahydrodipicolinate pocket.

It belongs to the DapB family.

The protein resides in the cytoplasm. It carries out the reaction (S)-2,3,4,5-tetrahydrodipicolinate + NAD(+) + H2O = (2S,4S)-4-hydroxy-2,3,4,5-tetrahydrodipicolinate + NADH + H(+). It catalyses the reaction (S)-2,3,4,5-tetrahydrodipicolinate + NADP(+) + H2O = (2S,4S)-4-hydroxy-2,3,4,5-tetrahydrodipicolinate + NADPH + H(+). It functions in the pathway amino-acid biosynthesis; L-lysine biosynthesis via DAP pathway; (S)-tetrahydrodipicolinate from L-aspartate: step 4/4. Catalyzes the conversion of 4-hydroxy-tetrahydrodipicolinate (HTPA) to tetrahydrodipicolinate. This chain is 4-hydroxy-tetrahydrodipicolinate reductase, found in Hahella chejuensis (strain KCTC 2396).